Here is a 69-residue protein sequence, read N- to C-terminus: Iota-conotoxin LtIIIA (69 aa).

The signal sequence occupies residues 1–20; the sequence is MLKMGVLLFTFLVLFPLTTL. Positions 21 to 52 are excised as a propeptide; the sequence is ELDTDRPVERHAAIKQDLKPQERRGIRLHAPR. Residues Glu54 and Glu57 each carry the 4-carboxyglutamate modification. Intrachain disulfides connect Cys55-Cys67, Cys56-Cys65, and Cys61-Cys68. A 4-hydroxyproline modification is found at Pro58.

As to expression, expressed by the venom duct.

It localises to the secreted. Its function is as follows. Iota-conotoxins bind to voltage-gated sodium channels and act as agonists by shifting the voltage-dependence of activation to more hyperpolarized levels. This toxin enhances tetrodotoxin-sensitive sodium current in rat dorsal root ganglion neurons. This Conus litteratus (Lettered cone) protein is Iota-conotoxin LtIIIA.